Here is a 1263-residue protein sequence, read N- to C-terminus: DNA polymerase II large subunit (1263 aa).

The disordered stretch occupies residues 1224 to 1250 (LENFNSSGNNGKKIEKKEKKAKEKPKK). Residues 1235–1244 (KKIEKKEKKA) are compositionally biased toward basic and acidic residues.

Belongs to the archaeal DNA polymerase II family. As to quaternary structure, heterodimer of a large subunit and a small subunit.

The enzyme catalyses DNA(n) + a 2'-deoxyribonucleoside 5'-triphosphate = DNA(n+1) + diphosphate. It catalyses the reaction Exonucleolytic cleavage in the 3'- to 5'-direction to yield nucleoside 5'-phosphates.. Its function is as follows. Possesses two activities: a DNA synthesis (polymerase) and an exonucleolytic activity that degrades single-stranded DNA in the 3'- to 5'-direction. Has a template-primer preference which is characteristic of a replicative DNA polymerase. The polypeptide is DNA polymerase II large subunit (polC) (Pyrococcus furiosus (strain ATCC 43587 / DSM 3638 / JCM 8422 / Vc1)).